We begin with the raw amino-acid sequence, 397 residues long: Argininosuccinate synthase (397 aa).

Residue 9-17 (AYSGGLDTT) coordinates ATP. Tyrosine 87 is a binding site for L-citrulline. Glycine 117 serves as a coordination point for ATP. The L-aspartate site is built by threonine 119, asparagine 123, and aspartate 124. Asparagine 123 contacts L-citrulline. L-citrulline-binding residues include arginine 127, serine 174, serine 183, glutamate 259, and tyrosine 271.

This sequence belongs to the argininosuccinate synthase family. Type 1 subfamily. In terms of assembly, homotetramer.

It localises to the cytoplasm. The enzyme catalyses L-citrulline + L-aspartate + ATP = 2-(N(omega)-L-arginino)succinate + AMP + diphosphate + H(+). It functions in the pathway amino-acid biosynthesis; L-arginine biosynthesis; L-arginine from L-ornithine and carbamoyl phosphate: step 2/3. This Pyrobaculum aerophilum (strain ATCC 51768 / DSM 7523 / JCM 9630 / CIP 104966 / NBRC 100827 / IM2) protein is Argininosuccinate synthase.